A 311-amino-acid chain; its full sequence is Ornithine carbamoyltransferase (311 aa).

Carbamoyl phosphate contacts are provided by residues 54–57 (STRT), Gln81, Arg105, and 132–135 (HPCQ). Residues Asn163, Asp221, and 225-226 (SM) each bind L-ornithine. Residues 261-262 (CL) and Arg289 each bind carbamoyl phosphate.

This sequence belongs to the aspartate/ornithine carbamoyltransferase superfamily. OTCase family.

It localises to the cytoplasm. The enzyme catalyses carbamoyl phosphate + L-ornithine = L-citrulline + phosphate + H(+). It participates in amino-acid degradation; L-arginine degradation via ADI pathway; carbamoyl phosphate from L-arginine: step 2/2. Functionally, reversibly catalyzes the transfer of the carbamoyl group from carbamoyl phosphate (CP) to the N(epsilon) atom of ornithine (ORN) to produce L-citrulline. This is Ornithine carbamoyltransferase from Azoarcus sp. (strain BH72).